A 781-amino-acid polypeptide reads, in one-letter code: Putative amine oxidase [copper-containing] (781 aa).

Positions 1–34 (MSLPKTANGMDKLKLCYLLLFYLGSSSLTEVSGA) are cleaved as a signal peptide. Cys-199 and Cys-203 are oxidised to a cystine. 385 to 395 (FFDSSYMIGMN) lines the substrate pocket. Asp-387 acts as the Proton acceptor in catalysis. Cys-405 and Cys-432 are disulfide-bonded. Substrate is bound at residue 472–477 (IANYDY). Tyr-475 (schiff-base intermediate with substrate; via topaquinone) is an active-site residue. A 2',4',5'-topaquinone modification is found at Tyr-475. His-525 and His-527 together coordinate Cu cation. Ca(2+)-binding residues include Asp-534, Asp-536, Glu-579, Phe-671, Asp-674, Glu-676, Asp-682, and Leu-683. Asp-534 and Asp-536 together coordinate Mn(2+). Asp-682 provides a ligand contact to Mn(2+). Cu cation is bound at residue His-693.

It belongs to the copper/topaquinone oxidase family. In terms of assembly, homodimer. The cofactor is Cu cation. Ca(2+) serves as cofactor. Requires L-topaquinone as cofactor. It depends on Mn(2+) as a cofactor. In terms of processing, topaquinone (TPQ) is generated by copper-dependent autoxidation of a specific tyrosyl residue. In terms of tissue distribution, prismatic layer of shell (at protein level). Expressed primarily in the mantle with highest level in the mantle edge and lower level in the mantle pallium.

It is found in the secreted. The polypeptide is Putative amine oxidase [copper-containing] (Margaritifera margaritifera (Freshwater pearl mussel)).